A 377-amino-acid polypeptide reads, in one-letter code: tRNA(Met) cytidine acetate ligase (377 aa).

Residues 7–20, G101, N151, and R176 contribute to the ATP site; that span reads VVEY…HRYH.

It belongs to the TmcAL family.

The protein resides in the cytoplasm. The enzyme catalyses cytidine(34) in elongator tRNA(Met) + acetate + ATP = N(4)-acetylcytidine(34) in elongator tRNA(Met) + AMP + diphosphate. In terms of biological role, catalyzes the formation of N(4)-acetylcytidine (ac(4)C) at the wobble position of elongator tRNA(Met), using acetate and ATP as substrates. First activates an acetate ion to form acetyladenylate (Ac-AMP) and then transfers the acetyl group to tRNA to form ac(4)C34. The chain is tRNA(Met) cytidine acetate ligase from Limosilactobacillus reuteri (strain DSM 20016) (Lactobacillus reuteri).